The sequence spans 232 residues: U2 small nuclear ribonucleoprotein B'' (232 aa).

The RRM 1 domain maps to 10 to 89; sequence QSIYIQNLNE…KPMRLQYAKA (80 aa). Positions 100 to 157 are disordered; that stretch reads TFVPKDKKRKQEEKVERKREDSQRPNTANGPSANGPSANNGVPAPSFQPSGQETMPPN. Basic and acidic residues predominate over residues 108–122; sequence RKQEEKVERKREDSQ. 2 stretches are compositionally biased toward polar residues: residues 123–139 and 146–156; these read RPNTANGPSANGPSANN and FQPSGQETMPP. Residues 158-232 enclose the RRM 2 domain; it reads NILFIQNLPH…NPMVISFAKK (75 aa).

It belongs to the RRM U1 A/B'' family. As to quaternary structure, component of the spliceosome where it is associated with snRNP U2.

The protein resides in the nucleus. It localises to the cajal body. The protein localises to the nucleoplasm. Its subcellular location is the cytoplasm. Functionally, involved in nuclear pre-mRNA splicing. The polypeptide is U2 small nuclear ribonucleoprotein B'' (U2B'') (Arabidopsis thaliana (Mouse-ear cress)).